The chain runs to 158 residues: U4/U6.U5 small nuclear ribonucleoprotein 27 kDa protein (158 aa).

The interval 1-102 (MGRSRSRSPE…AEDLEGKTEE (102 aa)) is disordered. Over residues 13-59 (RERRRSRSASRERERRRRERSRSRERRRSRSRSPHRRRSRSPRRHRS) the composition is skewed to basic residues. Over residues 66–101 (RLKDRRDDDKKEPKESKGGGSKERQLAAEDLEGKTE) the composition is skewed to basic and acidic residues.

Belongs to the SNUT3 family. Part of a tri-snRNP complex.

Its subcellular location is the nucleus. May play a role in mRNA splicing. The chain is U4/U6.U5 small nuclear ribonucleoprotein 27 kDa protein (snrnp27) from Xenopus laevis (African clawed frog).